The primary structure comprises 349 residues: Protein-glutamate methylesterase/protein-glutamine glutaminase (349 aa).

A Response regulatory domain is found at 5–122; it reads KVLVVDDSAF…SLDLYKVKDE (118 aa). D56 bears the 4-aspartylphosphate mark. A CheB-type methylesterase domain is found at 156 to 349; the sequence is ARPQQAIVAI…AAAIVQLIGE (194 aa). Catalysis depends on residues S168, H195, and D291.

Belongs to the CheB family. Phosphorylated by CheA. Phosphorylation of the N-terminal regulatory domain activates the methylesterase activity.

The protein localises to the cytoplasm. It catalyses the reaction [protein]-L-glutamate 5-O-methyl ester + H2O = L-glutamyl-[protein] + methanol + H(+). The enzyme catalyses L-glutaminyl-[protein] + H2O = L-glutamyl-[protein] + NH4(+). In terms of biological role, involved in chemotaxis. Part of a chemotaxis signal transduction system that modulates chemotaxis in response to various stimuli. Catalyzes the demethylation of specific methylglutamate residues introduced into the chemoreceptors (methyl-accepting chemotaxis proteins or MCP) by CheR. Also mediates the irreversible deamidation of specific glutamine residues to glutamic acid. The polypeptide is Protein-glutamate methylesterase/protein-glutamine glutaminase (Geobacillus kaustophilus (strain HTA426)).